The following is a 153-amino-acid chain: 6,7-dimethyl-8-ribityllumazine synthase (153 aa).

5-amino-6-(D-ribitylamino)uracil is bound by residues Phe22, 56-58 (AFE), and 80-82 (TVI). A (2S)-2-hydroxy-3-oxobutyl phosphate-binding site is contributed by 85–86 (AT). The active-site Proton donor is His88. 5-amino-6-(D-ribitylamino)uracil is bound at residue Phe113. Residue Arg127 coordinates (2S)-2-hydroxy-3-oxobutyl phosphate.

Belongs to the DMRL synthase family.

It carries out the reaction (2S)-2-hydroxy-3-oxobutyl phosphate + 5-amino-6-(D-ribitylamino)uracil = 6,7-dimethyl-8-(1-D-ribityl)lumazine + phosphate + 2 H2O + H(+). The protein operates within cofactor biosynthesis; riboflavin biosynthesis; riboflavin from 2-hydroxy-3-oxobutyl phosphate and 5-amino-6-(D-ribitylamino)uracil: step 1/2. Its function is as follows. Catalyzes the formation of 6,7-dimethyl-8-ribityllumazine by condensation of 5-amino-6-(D-ribitylamino)uracil with 3,4-dihydroxy-2-butanone 4-phosphate. This is the penultimate step in the biosynthesis of riboflavin. This is 6,7-dimethyl-8-ribityllumazine synthase from Clostridium perfringens (strain 13 / Type A).